A 276-amino-acid polypeptide reads, in one-letter code: MIVIGRSIVHPYITNEYEPFAAEKQQILSIMAGNQEIYSFRTSDELSFDLNLRVNIITSALELFQSGFQFRTFQQSFCNPQYWKRTSLGGFELLPNIPPSIAIQDIFKNGKLYGTECATAMIIIFYKALLSLYEKETFNRLFANLLLYTWDYDQDLKLITKTGGDLVPGDLVYFKNPQVNPATIEWQGENTIYLGNFFFYGHGVGVKTKEEIIYALNERRVPYAFISAFLTDTITRIDSRLMSYHASPNTPQTSIGFIPIRDDAIVATVGNTTTVY.

The protein belongs to the bacillus TGase family.

The catalysed reaction is L-glutaminyl-[protein] + L-lysyl-[protein] = [protein]-L-lysyl-N(6)-5-L-glutamyl-[protein] + NH4(+). In terms of biological role, probably plays a role in the assembly of the spore coat proteins by catalyzing epsilon-(gamma-glutamyl)lysine cross-links. The protein is Protein-glutamine gamma-glutamyltransferase of Bacillus cereus (strain AH820).